Consider the following 363-residue polypeptide: Chorismate synthase (363 aa).

Arg48 is a binding site for NADP(+). Residues 125–127 (RSS), 238–239 (NA), Gly278, 293–297 (KPTAS), and Arg319 contribute to the FMN site.

The protein belongs to the chorismate synthase family. In terms of assembly, homotetramer. Requires FMNH2 as cofactor.

It carries out the reaction 5-O-(1-carboxyvinyl)-3-phosphoshikimate = chorismate + phosphate. The protein operates within metabolic intermediate biosynthesis; chorismate biosynthesis; chorismate from D-erythrose 4-phosphate and phosphoenolpyruvate: step 7/7. Functionally, catalyzes the anti-1,4-elimination of the C-3 phosphate and the C-6 proR hydrogen from 5-enolpyruvylshikimate-3-phosphate (EPSP) to yield chorismate, which is the branch point compound that serves as the starting substrate for the three terminal pathways of aromatic amino acid biosynthesis. This reaction introduces a second double bond into the aromatic ring system. The polypeptide is Chorismate synthase (Acinetobacter baumannii (strain ACICU)).